The following is a 101-amino-acid chain: Small ribosomal subunit protein uS14 (101 aa).

It belongs to the universal ribosomal protein uS14 family. Part of the 30S ribosomal subunit. Contacts proteins S3 and S10.

Binds 16S rRNA, required for the assembly of 30S particles and may also be responsible for determining the conformation of the 16S rRNA at the A site. This chain is Small ribosomal subunit protein uS14, found in Aeromonas hydrophila subsp. hydrophila (strain ATCC 7966 / DSM 30187 / BCRC 13018 / CCUG 14551 / JCM 1027 / KCTC 2358 / NCIMB 9240 / NCTC 8049).